A 263-amino-acid chain; its full sequence is Regulatory protein RecX (263 aa).

This sequence belongs to the RecX family.

It localises to the cytoplasm. Modulates RecA activity. The protein is Regulatory protein RecX of Bacillus velezensis (strain DSM 23117 / BGSC 10A6 / LMG 26770 / FZB42) (Bacillus amyloliquefaciens subsp. plantarum).